The chain runs to 192 residues: Putative acetyltransferase SH0499 (192 aa).

Belongs to the transferase hexapeptide repeat family.

The sequence is that of Putative acetyltransferase SH0499 from Staphylococcus haemolyticus (strain JCSC1435).